The following is a 390-amino-acid chain: Chorismate synthase 1 (390 aa).

NADP(+) is bound by residues arginine 39 and arginine 45. Residues 132–134 (RSS), 253–254 (NA), glycine 298, 313–317 (KPIPT), and arginine 339 contribute to the FMN site.

Belongs to the chorismate synthase family. Homotetramer. FMNH2 serves as cofactor.

The catalysed reaction is 5-O-(1-carboxyvinyl)-3-phosphoshikimate = chorismate + phosphate. It functions in the pathway metabolic intermediate biosynthesis; chorismate biosynthesis; chorismate from D-erythrose 4-phosphate and phosphoenolpyruvate: step 7/7. In terms of biological role, catalyzes the anti-1,4-elimination of the C-3 phosphate and the C-6 proR hydrogen from 5-enolpyruvylshikimate-3-phosphate (EPSP) to yield chorismate, which is the branch point compound that serves as the starting substrate for the three terminal pathways of aromatic amino acid biosynthesis. This reaction introduces a second double bond into the aromatic ring system. The polypeptide is Chorismate synthase 1 (Bacillus anthracis).